The sequence spans 38 residues: Photosystem II reaction center protein L (38 aa).

Residues 17 to 37 form a helical membrane-spanning segment; sequence SLYWGLLLIFVLAVLFSNYFF.

The protein belongs to the PsbL family. As to quaternary structure, PSII is composed of 1 copy each of membrane proteins PsbA, PsbB, PsbC, PsbD, PsbE, PsbF, PsbH, PsbI, PsbJ, PsbK, PsbL, PsbM, PsbT, PsbX, PsbY, PsbZ, Psb30/Ycf12, at least 3 peripheral proteins of the oxygen-evolving complex and a large number of cofactors. It forms dimeric complexes.

The protein resides in the plastid. The protein localises to the chloroplast thylakoid membrane. In terms of biological role, one of the components of the core complex of photosystem II (PSII). PSII is a light-driven water:plastoquinone oxidoreductase that uses light energy to abstract electrons from H(2)O, generating O(2) and a proton gradient subsequently used for ATP formation. It consists of a core antenna complex that captures photons, and an electron transfer chain that converts photonic excitation into a charge separation. This subunit is found at the monomer-monomer interface and is required for correct PSII assembly and/or dimerization. In Psilotum nudum (Whisk fern), this protein is Photosystem II reaction center protein L.